The primary structure comprises 468 residues: MAIMHIRTRFAPSPTGFIHLGNLRSALYPWAFARHNKGDFILRIEDTDLERSSQEAVDVIIEGMAWLGMDIDEGPIYQMQRIDRYRAVIKEMVEAGLAYPCYMSEDELNKLRDQQMANKEKPRYNGLWRPEPGKDLPPIPEGVLPVIRFKNPIGGSVIWNDAVKGQIEISNDELDDLVIARPDGTPTYNFCVVVDDLDMKITHVIRGDDHVNNTPRQINIMKALGGSPPVYAHLPTVLNDLGEKMSKRNGAMSVRDYQKAGYLPDAILNYLARLGWSHGDAEVFTKEQFVDWFELDSLGRSPAQHNPEKLLWLNHQYIQNADAAKLAEACKPFAHQLGIDTENGPNFIQVVGLLKDRANTLIEIAEGAKLFYATAPNLTKDQITENISEAIVPALKDLIEALKNADGTKESYSAAFKQVLAQHQIKMPALAMPVRYALFATTQTPAIDAVLVVLGKEEAINRLSKVVV.

The 'HIGH' region signature appears at 12-22 (PSPTGFIHLGN). The short motif at 244–248 (KMSKR) is the 'KMSKS' region element. Position 247 (Lys247) interacts with ATP.

It belongs to the class-I aminoacyl-tRNA synthetase family. Glutamate--tRNA ligase type 1 subfamily. As to quaternary structure, monomer.

The protein resides in the cytoplasm. The catalysed reaction is tRNA(Glu) + L-glutamate + ATP = L-glutamyl-tRNA(Glu) + AMP + diphosphate. In terms of biological role, catalyzes the attachment of glutamate to tRNA(Glu) in a two-step reaction: glutamate is first activated by ATP to form Glu-AMP and then transferred to the acceptor end of tRNA(Glu). This Polynucleobacter asymbioticus (strain DSM 18221 / CIP 109841 / QLW-P1DMWA-1) (Polynucleobacter necessarius subsp. asymbioticus) protein is Glutamate--tRNA ligase.